A 188-amino-acid polypeptide reads, in one-letter code: Elongation factor P (188 aa).

Lysine 34 carries the post-translational modification N6-(3,6-diaminohexanoyl)-5-hydroxylysine.

This sequence belongs to the elongation factor P family. Post-translationally, may be beta-lysylated on the epsilon-amino group of Lys-34 by the combined action of EpmA and EpmB, and then hydroxylated on the C5 position of the same residue by EpmC (if this protein is present). Lysylation is critical for the stimulatory effect of EF-P on peptide-bond formation. The lysylation moiety may extend toward the peptidyltransferase center and stabilize the terminal 3-CCA end of the tRNA. Hydroxylation of the C5 position on Lys-34 may allow additional potential stabilizing hydrogen-bond interactions with the P-tRNA.

It localises to the cytoplasm. It functions in the pathway protein biosynthesis; polypeptide chain elongation. In terms of biological role, involved in peptide bond synthesis. Alleviates ribosome stalling that occurs when 3 or more consecutive Pro residues or the sequence PPG is present in a protein, possibly by augmenting the peptidyl transferase activity of the ribosome. Modification of Lys-34 is required for alleviation. This chain is Elongation factor P, found in Glaesserella parasuis serovar 5 (strain SH0165) (Haemophilus parasuis).